Reading from the N-terminus, the 191-residue chain is Peptide methionine sulfoxide reductase (191 aa).

Disordered regions lie at residues M1–N20 and E168–G191.

The protein belongs to the MsrA Met sulfoxide reductase family.

The enzyme catalyses L-methionyl-[protein] + [thioredoxin]-disulfide + H2O = L-methionyl-(S)-S-oxide-[protein] + [thioredoxin]-dithiol. It carries out the reaction [thioredoxin]-disulfide + L-methionine + H2O = L-methionine (S)-S-oxide + [thioredoxin]-dithiol. Its function is as follows. Has an important function as a repair enzyme for proteins that have been inactivated by oxidation. Catalyzes the reversible oxidation-reduction of methionine sulfoxide in proteins to methionine. This Fragaria ananassa (Strawberry) protein is Peptide methionine sulfoxide reductase.